The primary structure comprises 103 residues: Large ribosomal subunit protein bL21 (103 aa).

It belongs to the bacterial ribosomal protein bL21 family. As to quaternary structure, part of the 50S ribosomal subunit. Contacts protein L20.

This protein binds to 23S rRNA in the presence of protein L20. This is Large ribosomal subunit protein bL21 from Azotobacter vinelandii (strain DJ / ATCC BAA-1303).